Reading from the N-terminus, the 596-residue chain is M-phase inducer phosphatase (596 aa).

Residues serine 99 and serine 178 each carry the phosphoserine modification. The segment at 174-221 (LSSSSFDSYLRPNVSRSRSSGNAPPFLRSRSSSSYSINKKKGTSGGQA) is disordered. The 105-residue stretch at 429–533 (IFDKCIIIDC…FYENHKNRCD (105 aa)) folds into the Rhodanese domain. Cysteine 480 serves as the catalytic Phosphocysteine intermediate.

This sequence belongs to the MPI phosphatase family. Interacts with rad24 during G2 in a srk1-dependent manner; the interaction is increased during osmostress. Post-translationally, phosphorylated by srk1 in the N-terminus; phosphorylation promotes nuclear exclusion.

The protein resides in the cytoplasm. It localises to the nucleus. The catalysed reaction is O-phospho-L-tyrosyl-[protein] + H2O = L-tyrosyl-[protein] + phosphate. Tyrosine protein phosphatase which functions as a dosage-dependent inducer of mitotic and meiotic progression. Directly dephosphorylates cdc2 and stimulates its kinase activity. Required for the G2/M transition of the cell cycle. Required for induction of meiosis II. The polypeptide is M-phase inducer phosphatase (Schizosaccharomyces pombe (strain 972 / ATCC 24843) (Fission yeast)).